A 348-amino-acid chain; its full sequence is Phospho-2-dehydro-3-deoxyheptonate aldolase, Trp-sensitive (348 aa).

The protein belongs to the class-I DAHP synthase family.

It catalyses the reaction D-erythrose 4-phosphate + phosphoenolpyruvate + H2O = 7-phospho-2-dehydro-3-deoxy-D-arabino-heptonate + phosphate. It functions in the pathway metabolic intermediate biosynthesis; chorismate biosynthesis; chorismate from D-erythrose 4-phosphate and phosphoenolpyruvate: step 1/7. Stereospecific condensation of phosphoenolpyruvate (PEP) and D-erythrose-4-phosphate (E4P) giving rise to 3-deoxy-D-arabino-heptulosonate-7-phosphate (DAHP). This chain is Phospho-2-dehydro-3-deoxyheptonate aldolase, Trp-sensitive (aroH), found in Escherichia coli O157:H7.